The following is a 90-amino-acid chain: Putative regulatory protein NT01CX_2250 (90 aa).

It belongs to the RemA family.

In Clostridium novyi (strain NT), this protein is Putative regulatory protein NT01CX_2250.